The chain runs to 196 residues: Peptidyl-tRNA hydrolase (196 aa).

Tyr-17 lines the tRNA pocket. His-22 acts as the Proton acceptor in catalysis. TRNA is bound by residues Phe-68, Asn-70, and Asn-116.

Belongs to the PTH family. In terms of assembly, monomer.

The protein resides in the cytoplasm. It catalyses the reaction an N-acyl-L-alpha-aminoacyl-tRNA + H2O = an N-acyl-L-amino acid + a tRNA + H(+). Functionally, hydrolyzes ribosome-free peptidyl-tRNAs (with 1 or more amino acids incorporated), which drop off the ribosome during protein synthesis, or as a result of ribosome stalling. Its function is as follows. Catalyzes the release of premature peptidyl moieties from peptidyl-tRNA molecules trapped in stalled 50S ribosomal subunits, and thus maintains levels of free tRNAs and 50S ribosomes. The polypeptide is Peptidyl-tRNA hydrolase (Serratia proteamaculans (strain 568)).